The chain runs to 282 residues: MAKKKSILDLMKMKKAEEQVAWVTAYDFPTASFAEQAGMEMILVGDSLGMVVLGYQGTIPVTMEDCISHCQAVRRGAPNTWVIGDMPFGSYQVSDEDAVRNAVRFMKEADVDCIKLEGGDRVKSRIRAITDAGIPVMGHIGLTPQSSGQLGGFKAQGRRVDNARVLIQDALVVQEAGAFSLLVEAVPPEVTKFIADKLDIPVYSIGAGPCDGQLVISGDMLGKFQAFTPKFIKKYANVAEVETNAFKEYVAEVKAGQFPTDDHVYHILDTQEEFEKLFQEFK.

Residues aspartate 46 and aspartate 85 each coordinate Mg(2+). Residues 46-47 (DS), aspartate 85, and lysine 115 contribute to the 3-methyl-2-oxobutanoate site. Glutamate 117 serves as a coordination point for Mg(2+). The active-site Proton acceptor is glutamate 184.

It belongs to the PanB family. Homodecamer; pentamer of dimers. Mg(2+) is required as a cofactor.

The protein localises to the cytoplasm. The catalysed reaction is 3-methyl-2-oxobutanoate + (6R)-5,10-methylene-5,6,7,8-tetrahydrofolate + H2O = 2-dehydropantoate + (6S)-5,6,7,8-tetrahydrofolate. Its pathway is cofactor biosynthesis; (R)-pantothenate biosynthesis; (R)-pantoate from 3-methyl-2-oxobutanoate: step 1/2. Its function is as follows. Catalyzes the reversible reaction in which hydroxymethyl group from 5,10-methylenetetrahydrofolate is transferred onto alpha-ketoisovalerate to form ketopantoate. This is 3-methyl-2-oxobutanoate hydroxymethyltransferase from Alkaliphilus metalliredigens (strain QYMF).